A 193-amino-acid polypeptide reads, in one-letter code: Bcl-2-like protein 2 (193 aa).

A2 carries the N-acetylalanine modification. The BH4 signature appears at 9-29 (DTRALVADFVGYKLRQKGYVC). The BH1 signature appears at 85–104 (ELFQGGPNWGRLVAFFVFGA). A BH2 motif is present at residues 136–151 (DWIHSSGGWAEFTALY). Phosphoserine is present on A177.

It belongs to the Bcl-2 family. Interacts with HIF3A (via C-terminus domain). Interacts with BOP. In terms of tissue distribution, expressed (at protein level) in a wide range of tissues with highest levels in brain, spinal cord, testis, pancreas, heart, spleen and mammary glands. Moderate levels found in thymus, ovary and small intestine. Not detected in salivary gland, muscle or liver. Also expressed in cell lines of myeloid, fibroblast and epithelial origin. Not detected in most lymphoid cell lines.

It is found in the mitochondrion membrane. Functionally, promotes cell survival. Blocks dexamethasone-induced apoptosis. Mediates survival of postmitotic Sertoli cells by suppressing death-promoting activity of BAX. This Homo sapiens (Human) protein is Bcl-2-like protein 2 (BCL2L2).